A 256-amino-acid polypeptide reads, in one-letter code: Indole-3-glycerol phosphate synthase (256 aa).

This sequence belongs to the TrpC family.

The catalysed reaction is 1-(2-carboxyphenylamino)-1-deoxy-D-ribulose 5-phosphate + H(+) = (1S,2R)-1-C-(indol-3-yl)glycerol 3-phosphate + CO2 + H2O. Its pathway is amino-acid biosynthesis; L-tryptophan biosynthesis; L-tryptophan from chorismate: step 4/5. This is Indole-3-glycerol phosphate synthase from Pelodictyon phaeoclathratiforme (strain DSM 5477 / BU-1).